Consider the following 607-residue polypeptide: Albumin (607 aa).

Positions 1-18 (MKWVTFVSLLFLFSSAYF) are cleaved as a signal peptide. Positions 19–24 (RGVLRR) are excised as a propeptide. 3 Albumin domains span residues 19-209 (RGVL…DALK), 210-402 (ERIL…QFTP), and 403-600 (LVEE…KLVA). Residue His27 coordinates Cu cation. Ser29 bears the Phosphoserine mark. Positions 30 and 37 each coordinate Ca(2+). Cys77 and Cys86 are oxidised to a cystine. A phosphoserine mark is found at Ser82 and Ser89. His91 is a Zn(2+) binding site. 6 disulfides stabilise this stretch: Cys99-Cys115, Cys114-Cys125, Cys147-Cys192, Cys191-Cys200, Cys223-Cys269, and Cys268-Cys276. Thr107 bears the Phosphothreonine mark. Lys228 is modified (N6-succinyllysine). Glu267 serves as a coordination point for Ca(2+). Zn(2+) contacts are provided by His270 and Asp272. The Ca(2+) site is built by Asp272, Glu275, Asp278, and Asp282. Cystine bridges form between Cys288-Cys302, Cys301-Cys312, Cys339-Cys384, Cys383-Cys392, Cys415-Cys461, Cys460-Cys471, Cys484-Cys500, and Cys499-Cys510. A Phosphoserine modification is found at Ser442. Thr443 and Thr445 each carry phosphothreonine. At Ser512 the chain carries Phosphoserine. 2 disulfides stabilise this stretch: Cys537/Cys582 and Cys581/Cys590. At Lys557 the chain carries N6-methyllysine. Thr569 carries the phosphothreonine modification. An N6-succinyllysine modification is found at Lys587.

The protein belongs to the ALB/AFP/VDB family. As to quaternary structure, interacts with FCGRT; this interaction regulates ALB homeostasis. Interacts with TASOR. In plasma, occurs in a covalently-linked complex with chromophore-bound alpha-1-microglobulin; this interaction does not prevent fatty acid binding to ALB. In terms of processing, phosphorylated by FAM20C in the extracellular medium. In terms of tissue distribution, plasma.

It is found in the secreted. In terms of biological role, binds water, Ca(2+), Na(+), K(+), fatty acids, hormones, bilirubin and drugs. Its main function is the regulation of the colloidal osmotic pressure of blood. Major zinc transporter in plasma, typically binds about 80% of all plasma zinc. Major calcium and magnesium transporter in plasma, binds approximately 45% of circulating calcium and magnesium in plasma. Potentially has more than two calcium-binding sites and might additionally bind calcium in a non-specific manner. The shared binding site between zinc and calcium at residue Asp-272 suggests a crosstalk between zinc and calcium transport in the blood. The rank order of affinity is zinc &gt; calcium &gt; magnesium. Binds to the bacterial siderophore enterobactin and inhibits enterobactin-mediated iron uptake of E.coli from ferric transferrin, and may thereby limit the utilization of iron and growth of enteric bacteria such as E.coli. Does not prevent iron uptake by the bacterial siderophore aerobactin. This is Albumin (ALB) from Equus asinus (Donkey).